A 207-amino-acid polypeptide reads, in one-letter code: Guanylate kinase (207 aa).

Residues 4 to 184 (GLLFIVSAPS…AVSDLYKIIR (181 aa)) enclose the Guanylate kinase-like domain. ATP is bound at residue 11–18 (APSGTGKS).

It belongs to the guanylate kinase family.

Its subcellular location is the cytoplasm. It catalyses the reaction GMP + ATP = GDP + ADP. Functionally, essential for recycling GMP and indirectly, cGMP. This Buchnera aphidicola subsp. Baizongia pistaciae (strain Bp) protein is Guanylate kinase.